The primary structure comprises 622 residues: Procollagen galactosyltransferase 1 (622 aa).

The N-terminal stretch at 1-29 is a signal peptide; it reads MAAAPRAGRRRGQPLLALLLLLLAPLPPG. 3 N-linked (GlcNAc...) asparagine glycosylation sites follow: Asn-96, Asn-184, and Asn-381. A compositionally biased stretch (basic and acidic residues) spans 588–606; that stretch reads RAKSQKMREQQALSREAKN. The segment at 588 to 622 is disordered; it reads RAKSQKMREQQALSREAKNSDVLQSPLDSAARDEL. The Endoplasmic reticulum retention motif motif lies at 619–622; the sequence is RDEL.

It belongs to the glycosyltransferase 25 family. N-glycosylated. Ubiquitous with higher levels in placenta, heart, lung and spleen.

Its subcellular location is the endoplasmic reticulum lumen. It carries out the reaction (5R)-5-hydroxy-L-lysyl-[collagen] + UDP-alpha-D-galactose = (5R)-5-O-(beta-D-galactosyl)-5-hydroxy-L-lysyl-[collagen] + UDP + H(+). Beta-galactosyltransferase that transfers beta-galactose to hydroxylysine residues of type I collagen. By acting on collagen glycosylation, facilitates the formation of collagen triple helix. Also involved in the biosynthesis of collagen type IV. The chain is Procollagen galactosyltransferase 1 (COLGALT1) from Homo sapiens (Human).